The sequence spans 183 residues: Small ribosomal subunit protein uS4c (183 aa).

The S4 RNA-binding domain occupies 82-143; that stretch reads MRLDNILFRL…KQRSKALIQN (62 aa).

This sequence belongs to the universal ribosomal protein uS4 family. As to quaternary structure, part of the 30S ribosomal subunit. Contacts protein S5. The interaction surface between S4 and S5 is involved in control of translational fidelity.

The protein localises to the plastid. It localises to the chloroplast. Functionally, one of the primary rRNA binding proteins, it binds directly to 16S rRNA where it nucleates assembly of the body of the 30S subunit. In terms of biological role, with S5 and S12 plays an important role in translational accuracy. The chain is Small ribosomal subunit protein uS4c (rps4) from Freesia sp. (strain Lejeune 1997).